Reading from the N-terminus, the 783-residue chain is Cadherin-5 (783 aa).

Residues 1 to 25 form the signal peptide; the sequence is MQALVMLLATGATYYLGLLAAAAAA. Residues 26 to 45 constitute a propeptide that is removed on maturation; it reads VNPGRPNTPGSLPAHRRQKR. Cadherin domains are found at residues 44–149, 150–256, 257–371, 372–478, and 478–585; these read KRDW…WPVF, THRV…FPIF, TQNR…PPIF, QQPF…APEF, and FAKP…GEFT. Residues 46 to 599 lie on the Extracellular side of the membrane; it reads DWIWNQMHID…AAAQVGISIQ (554 aa). 2 residues coordinate Ca(2+): glutamate 56 and glutamate 57. N-linked (GlcNAc...) asparagine glycosylation occurs at asparagine 59. Residues aspartate 107, glutamate 109, aspartate 141, valine 142, asparagine 143, aspartate 144, and asparagine 145 each coordinate Ca(2+). Asparagine 155 carries an N-linked (GlcNAc...) asparagine glycan. The Ca(2+) site is built by aspartate 175, aspartate 177, histidine 184, and aspartate 229. N-linked (GlcNAc...) asparagine glycosylation is found at asparagine 361, asparagine 441, and asparagine 523. A helical transmembrane segment spans residues 600–620; sequence ALVAIFLCILTFTVITLLIIL. The segment at 621–660 is required for interaction with PALS1; sequence RRRLRKQARAHGKSVPEIHEQLVTYDEEGGGEMDTTSYDV. Topologically, residues 621 to 783 are cytoplasmic; it reads RRRLRKQARA…GSDPQEELVY (163 aa).

Part of a complex composed of AMOTL2, MAGI1 and CDH5, within the complex AMOTL2 acts as a scaffold protein for the interaction of MAGI1 with CDH5. The complex is required for coupling actin fibers to cell junctions in endothelial cells. Within the complex AMOTL2 (via its N-terminus) interacts with CDH5. Interacts (via cadherin 5 domain) with PTPRB. Interacts with TRPC4. Interacts with KRIT1. Interacts with PARD3. Interacts with RTN4 (isoform B). Interacts with PALS1; the interaction promotes PALS1 localization to cell junctions and is required for CDH5-mediated vascular lumen formation and endothelial cell. Interacts with CTNND1/p120-catenin; the interaction controls CADH5 endocytosis. Phosphorylated on tyrosine residues by KDR/VEGFR-2. Dephosphorylated by PTPRB. Post-translationally, O-glycosylated.

It is found in the cell junction. The protein localises to the adherens junction. Its subcellular location is the cell membrane. It localises to the cytoplasm. Cadherins are calcium-dependent cell adhesion proteins. They preferentially interact with themselves in a homophilic manner in connecting cells; cadherins may thus contribute to the sorting of heterogeneous cell types. This cadherin may play a important role in endothelial cell biology through control of the cohesion and organization of the intercellular junctions. It associates with alpha-catenin forming a link to the cytoskeleton. Plays a role in coupling actin fibers to cell junctions in endothelial cells, via acting as a cell junctional complex anchor for AMOTL2 and MAGI1. Acts in concert with KRIT1 and PALS1 to establish and maintain correct endothelial cell polarity and vascular lumen. These effects are mediated by recruitment and activation of the Par polarity complex and RAP1B. Required for activation of PRKCZ and for localization of phosphorylated PRKCZ, PARD3, TIAM1 and RAP1B to the cell junction. Associates with CTNND1/p120-catenin to control CADH5 endocytosis. This Bos taurus (Bovine) protein is Cadherin-5.